A 127-amino-acid polypeptide reads, in one-letter code: Protein translocase subunit SecE (127 aa).

At 1 to 19 the chain is on the cytoplasmic side; that stretch reads MSANTEAQGSGRGLEAMKW. A helical membrane pass occupies residues 20–32; the sequence is VVVVALLLVAIVG. At 33 to 48 the chain is on the periplasmic side; sequence NYLYRDIMLPLRALAV. The chain crosses the membrane as a helical span at residues 49–60; it reads VILIAAAGGVAL. Residues 61 to 97 lie on the Cytoplasmic side of the membrane; it reads LTTKGKATVAFAREARTEVRKVIWPTRQETLHTTLIV. Residues 98-115 traverse the membrane as a helical segment; the sequence is AAVTAVMSLILWGLDGIL. Topologically, residues 116 to 127 are periplasmic; sequence VRLVSFITGLRF.

It belongs to the SecE/SEC61-gamma family. In terms of assembly, component of the Sec protein translocase complex. Heterotrimer consisting of SecY, SecE and SecG subunits. The heterotrimers can form oligomers, although 1 heterotrimer is thought to be able to translocate proteins. Interacts with the ribosome. Interacts with SecDF, and other proteins may be involved. Interacts with SecA.

It localises to the cell inner membrane. Its function is as follows. Essential subunit of the Sec protein translocation channel SecYEG. Clamps together the 2 halves of SecY. May contact the channel plug during translocation. The sequence is that of Protein translocase subunit SecE from Escherichia coli O157:H7.